Reading from the N-terminus, the 275-residue chain is Light-independent protochlorophyllide reductase iron-sulfur ATP-binding protein (275 aa).

Residues 12–17 (GIGKST) and Lys41 contribute to the ATP site. Ser16 is a Mg(2+) binding site. [4Fe-4S] cluster-binding residues include Cys97 and Cys131. An ATP-binding site is contributed by 182–183 (NR).

Belongs to the NifH/BchL/ChlL family. In terms of assembly, homodimer. Protochlorophyllide reductase is composed of three subunits; BchL, BchN and BchB. [4Fe-4S] cluster serves as cofactor.

It carries out the reaction chlorophyllide a + oxidized 2[4Fe-4S]-[ferredoxin] + 2 ADP + 2 phosphate = protochlorophyllide a + reduced 2[4Fe-4S]-[ferredoxin] + 2 ATP + 2 H2O. It functions in the pathway porphyrin-containing compound metabolism; bacteriochlorophyll biosynthesis (light-independent). In terms of biological role, component of the dark-operative protochlorophyllide reductase (DPOR) that uses Mg-ATP and reduced ferredoxin to reduce ring D of protochlorophyllide (Pchlide) to form chlorophyllide a (Chlide). This reaction is light-independent. The L component serves as a unique electron donor to the NB-component of the complex, and binds Mg-ATP. This Chlorobium phaeobacteroides (strain DSM 266 / SMG 266 / 2430) protein is Light-independent protochlorophyllide reductase iron-sulfur ATP-binding protein.